A 437-amino-acid polypeptide reads, in one-letter code: Glutamyl-tRNA reductase (437 aa).

Substrate-binding positions include 49–52, Ser109, 114–116, and Gln120; these read TCNR and ETQ. The active-site Nucleophile is the Cys50. 189-194 provides a ligand contact to NADP(+); it reads GAGEMS.

The protein belongs to the glutamyl-tRNA reductase family. Homodimer.

It catalyses the reaction (S)-4-amino-5-oxopentanoate + tRNA(Glu) + NADP(+) = L-glutamyl-tRNA(Glu) + NADPH + H(+). Its pathway is porphyrin-containing compound metabolism; protoporphyrin-IX biosynthesis; 5-aminolevulinate from L-glutamyl-tRNA(Glu): step 1/2. Catalyzes the NADPH-dependent reduction of glutamyl-tRNA(Glu) to glutamate 1-semialdehyde (GSA). This is Glutamyl-tRNA reductase from Listeria welshimeri serovar 6b (strain ATCC 35897 / DSM 20650 / CCUG 15529 / CIP 8149 / NCTC 11857 / SLCC 5334 / V8).